A 67-amino-acid chain; its full sequence is Large ribosomal subunit protein bL35 (67 aa).

The disordered stretch occupies residues 1-20 (MPKLKTKSGAKKRFVPKKSG).

The protein belongs to the bacterial ribosomal protein bL35 family.

The protein is Large ribosomal subunit protein bL35 of Anaeromyxobacter dehalogenans (strain 2CP-1 / ATCC BAA-258).